Reading from the N-terminus, the 614-residue chain is BPI fold-containing family B member 4 (614 aa).

An N-terminal signal peptide occupies residues 1–18; that stretch reads MWMAWCVAALSVVAVCGT. N-linked (GlcNAc...) asparagine glycosylation is present at Asn273. A disulfide bond links Cys295 and Cys332.

Belongs to the BPI/LBP/Plunc superfamily. BPI/LBP family. Expressed in nasal tissue.

The protein localises to the secreted. It localises to the cytoplasm. In terms of biological role, may have the capacity to recognize and bind specific classes of odorants. May act as a carrier molecule, transporting odorants across the mucus layer to access receptor sites. May serve as a primary defense mechanism by recognizing and removing potentially harmful odorants or pathogenic microorganisms from the mucosa or clearing excess odorant from mucus to enable new odorant stimuli to be received. This is BPI fold-containing family B member 4 (BPIFB4) from Homo sapiens (Human).